Consider the following 781-residue polypeptide: Arf-GAP with coiled-coil, ANK repeat and PH domain-containing protein 2 (781 aa).

The 226-residue stretch at 1–226 folds into the BAR domain; the sequence is MKVTVDFEEC…MKDLGAQLDQ (226 aa). The region spanning 266–361 is the PH domain; that stretch reads GIVMEGYLFK…WIKAVQTSIA (96 aa). Positions 365–378 are enriched in basic and acidic residues; that stretch reads REKGDESEKQEKKS. Positions 365-390 are disordered; sequence REKGDESEKQEKKSSPSTGSLESGSE. The span at 379 to 388 shows a compositional bias: low complexity; the sequence is SPSTGSLESG. The 123-residue stretch at 399-521 folds into the Arf-GAP domain; sequence ESALQRVQCI…KFVEKQPAAA (123 aa). The C4-type zinc finger occupies 414 to 437; sequence CCDCGLADPRWASINLGITLCIEC. The interval 520–576 is disordered; that stretch reads AAVSPLESRTKVLPQSQEEKRHSAPEKSFLAIEQGAASPRVRSSDSGIQQSVDDSRE. ANK repeat units lie at residues 642–671, 675–704, and 708–737; these read NKAT…NVNI, KGRG…NQHA, and DGKD…NEEM.

It localises to the endosome membrane. The protein localises to the cell membrane. With respect to regulation, GAP activity stimulated by phosphatidylinositol 4,5-bisphosphate (PIP2) and phosphatidic acid. In terms of biological role, GTPase-activating protein (GAP) for ADP ribosylation factor 6 (ARF6). The chain is Arf-GAP with coiled-coil, ANK repeat and PH domain-containing protein 2 (ACAP2) from Gallus gallus (Chicken).